The sequence spans 213 residues: UPF0056 membrane protein AF_2111 (213 aa).

6 consecutive transmembrane segments (helical) span residues 1–21 (MDIA…FIII), 51–71 (IIAF…LDYF), 75–95 (ISSL…DILL), 118–138 (VFPL…GIVL), 142–162 (AGDV…YSIV), and 181–201 (ADIA…EFVF).

Belongs to the UPF0056 (MarC) family.

The protein resides in the cell membrane. This is UPF0056 membrane protein AF_2111 from Archaeoglobus fulgidus (strain ATCC 49558 / DSM 4304 / JCM 9628 / NBRC 100126 / VC-16).